The primary structure comprises 226 residues: Transcriptional regulatory protein DpiA (226 aa).

Residues 6-122 (TLLIVEDETP…RLGQTLTRFR (117 aa)) form the Response regulatory domain. Asp-57 bears the 4-aspartylphosphate mark. The segment at residues 180–199 (AETVAQALTISRTTARRYLE) is a DNA-binding region (H-T-H motif).

Post-translationally, phosphorylated and activated by DpiB.

The protein localises to the cytoplasm. Member of the two-component regulatory system DpiA/DpiB, which is essential for expression of citrate-specific fermentation genes and genes involved in plasmid inheritance. Could be involved in response to both the presence of citrate and external redox conditions. This chain is Transcriptional regulatory protein DpiA (dpiA), found in Escherichia coli O157:H7.